The following is a 447-amino-acid chain: FAD-dependent monooxygenase tropB (447 aa).

The helical transmembrane segment at 12-32 (PLSVGIVGGGIIGVILAAGLV) threads the bilayer. FAD contacts are provided by E42, A55, and R124. The N-linked (GlcNAc...) asparagine glycan is linked to N153. Active-site residues include R206 and Y239. Residue N243 is glycosylated (N-linked (GlcNAc...) asparagine). The FAD site is built by D322 and A335.

It belongs to the paxM FAD-dependent monooxygenase family. Requires FAD as cofactor.

Its subcellular location is the membrane. It functions in the pathway secondary metabolite biosynthesis. In terms of biological role, FAD-dependent monooxygenase; part of the gene cluster that mediates the biosynthesis of the tropolone class of fungal maleic anhydrides. Within the pathway, tropB catalyzes a synthetically challenging asymmetric oxidative dearomatization reaction to convert 3-methylorcinaldehyde into a hydroxycyclohexadione. The pathway begins with the synthesis of 3-methylorcinaldehyde by the non-reducing polyketide synthase (PKS) tropA. 3-methylorcinaldehyde is the substrate for the FAD-dependent monooxygenase tropB to yield a dearomatized hydroxycyclohexadione. The 2-oxoglutarate-dependent dioxygenase tropC then performs the oxidative ring expansion to provide the first tropolone metabolite stipitaldehyde. Trop D converts stipitaldehyde into stipitacetal which is in turn converted to stipitalide by the short-chain dehydrogenase/reductase tropE. The next steps involve tropF, tropG, tropH, tropI and tropJ to form successive tropolone maleic anhydrides including stipitaldehydic, stipitatonic and stipitatic acids. The protein is FAD-dependent monooxygenase tropB of Talaromyces stipitatus (strain ATCC 10500 / CBS 375.48 / QM 6759 / NRRL 1006) (Penicillium stipitatum).